The chain runs to 340 residues: MAVTMEYEKDVKVAALDGKKIAVIGYGSQGHAHAQNLRDTGHDVIIGVRPGKSFDKAKEDGFDTYTVAEAAKLADVIMILAPDEIQQDLYEAEIAPNLEAGNAVGFAHGFNIHFEFIKVPADVDVFMCAPKGPGHLVRRTFEEGFGVPALYAVYQDATGNAKDIAMDWCKGVGSARVGLLETTYKEETEEDLFGEQAVLCGGLTALIEAGFEVLTEAGYAPELAYFEVLHEMKLIVDLIYEGGFKKMRQSISNTAEYGDYVSGPRVITEQVKENMKAVLADIQNGKFANDFVDDYKAGRPKLTAYREQAANLEIEKVGAELRKAMPFVGKNDDDAFKIYN.

The 178-residue stretch at 5–182 (MEYEKDVKVA…GSARVGLLET (178 aa)) folds into the KARI N-terminal Rossmann domain. NADP(+) is bound by residues 26–29 (YGSQ), R49, S53, and 83–86 (DEIQ). H108 is an active-site residue. G134 is a binding site for NADP(+). The region spanning 183–328 (TYKEETEEDL…AELRKAMPFV (146 aa)) is the KARI C-terminal knotted domain. Mg(2+) contacts are provided by D191, E195, E227, and E231. Substrate is bound at residue S252.

This sequence belongs to the ketol-acid reductoisomerase family. The cofactor is Mg(2+).

The enzyme catalyses (2R)-2,3-dihydroxy-3-methylbutanoate + NADP(+) = (2S)-2-acetolactate + NADPH + H(+). It catalyses the reaction (2R,3R)-2,3-dihydroxy-3-methylpentanoate + NADP(+) = (S)-2-ethyl-2-hydroxy-3-oxobutanoate + NADPH + H(+). The protein operates within amino-acid biosynthesis; L-isoleucine biosynthesis; L-isoleucine from 2-oxobutanoate: step 2/4. It functions in the pathway amino-acid biosynthesis; L-valine biosynthesis; L-valine from pyruvate: step 2/4. In terms of biological role, involved in the biosynthesis of branched-chain amino acids (BCAA). Catalyzes an alkyl-migration followed by a ketol-acid reduction of (S)-2-acetolactate (S2AL) to yield (R)-2,3-dihydroxy-isovalerate. In the isomerase reaction, S2AL is rearranged via a Mg-dependent methyl migration to produce 3-hydroxy-3-methyl-2-ketobutyrate (HMKB). In the reductase reaction, this 2-ketoacid undergoes a metal-dependent reduction by NADPH to yield (R)-2,3-dihydroxy-isovalerate. In Streptococcus sanguinis (strain SK36), this protein is Ketol-acid reductoisomerase (NADP(+)).